The following is a 230-amino-acid chain: ATP synthase subunit a (230 aa).

Transmembrane regions (helical) follow at residues leucine 17–alanine 37, isoleucine 78–isoleucine 98, aspartate 107–isoleucine 127, leucine 165–valine 187, and glutamate 198–isoleucine 218.

Belongs to the ATPase A chain family. As to quaternary structure, F-type ATPases have 2 components, CF(1) - the catalytic core - and CF(0) - the membrane proton channel. CF(1) has five subunits: alpha(3), beta(3), gamma(1), delta(1), epsilon(1). CF(0) has three main subunits: a(1), b(2) and c(9-12). The alpha and beta chains form an alternating ring which encloses part of the gamma chain. CF(1) is attached to CF(0) by a central stalk formed by the gamma and epsilon chains, while a peripheral stalk is formed by the delta and b chains.

Its subcellular location is the cell inner membrane. Key component of the proton channel; it plays a direct role in the translocation of protons across the membrane. In Legionella pneumophila (strain Corby), this protein is ATP synthase subunit a.